A 1014-amino-acid chain; its full sequence is Ephrin type-B receptor 6 (1014 aa).

The N-terminal stretch at 1-32 (MATEGTTGSGSRVVAGMVCSLWLLVLGSSVLA) is a signal peptide. Topologically, residues 33–591 (LEEVLLDTTG…LPEKLSLVIG (559 aa)) are extracellular. In terms of domain architecture, Eph LBD spans 34–232 (EEVLLDTTGE…FSYTCPSVLR (199 aa)). Fibronectin type-III domains lie at 364–479 (PPSA…TSHE) and 480–575 (VPSA…TLPQ). An N-linked (GlcNAc...) asparagine glycan is attached at N473. Residues 592–612 (SILGALAFLLLAAITVLAVIF) traverse the membrane as a helical segment. At 613 to 1014 (QRKRRGTGYT…HLRQPGSVEV (402 aa)) the chain is on the cytoplasmic side. In terms of domain architecture, Protein kinase spans 663–912 (IKIEEVIGAG…QLVAAFDKMI (250 aa)). 669-677 (IGAGSFGEV) serves as a coordination point for ATP. An SAM domain is found at 941–1005 (PCLDSPQAWL…LHNIQLLQQH (65 aa)). Positions 1012 to 1014 (VEV) match the PDZ-binding motif.

It belongs to the protein kinase superfamily. Tyr protein kinase family. Ephrin receptor subfamily. In terms of assembly, interacts with CBL and EPHB1. Interacts with FYN; this interaction takes place in a ligand-independent manner. Ligand-binding increases phosphorylation on tyrosine residues. Phosphorylation on tyrosine residues is mediated by transphosphorylation by the catalytically active EPHB1 in a ligand-independent manner. Tyrosine phosphorylation of the receptor may act as a switch on the functional transition from cell adhesion/attraction to de-adhesion/repulsion. As to expression, high level in thymus, and brain. Very low levels of expression in kidney, lung, liver, bone marrow, skeletal muscle, spleen from 2 week old and adult mice, heart, testes and embryonic stem cells.

Its subcellular location is the cell membrane. The protein resides in the secreted. In terms of biological role, kinase-defective receptor for members of the ephrin-B family. Binds to ephrin-B1 and ephrin-B2. Modulates cell adhesion and migration by exerting both positive and negative effects upon stimulation with ephrin-B2. Inhibits JNK activation, T-cell receptor-induced IL-2 secretion and CD25 expression upon stimulation with ephrin-B2. In Mus musculus (Mouse), this protein is Ephrin type-B receptor 6 (Ephb6).